Consider the following 474-residue polypeptide: Bifunctional protein HldE (474 aa).

Residues 1-318 are ribokinase; sequence MKLSMPRFDQ…RAIQREEGSE (318 aa). An ATP-binding site is contributed by 194–197; sequence NLSE. Residue Asp-263 is part of the active site. Positions 343 to 474 are cytidylyltransferase; that stretch reads FTNGCFDILH…AIVEKIRGQG (132 aa).

The protein in the N-terminal section; belongs to the carbohydrate kinase PfkB family. In the C-terminal section; belongs to the cytidylyltransferase family. In terms of assembly, homodimer.

The catalysed reaction is D-glycero-beta-D-manno-heptose 7-phosphate + ATP = D-glycero-beta-D-manno-heptose 1,7-bisphosphate + ADP + H(+). The enzyme catalyses D-glycero-beta-D-manno-heptose 1-phosphate + ATP + H(+) = ADP-D-glycero-beta-D-manno-heptose + diphosphate. The protein operates within nucleotide-sugar biosynthesis; ADP-L-glycero-beta-D-manno-heptose biosynthesis; ADP-L-glycero-beta-D-manno-heptose from D-glycero-beta-D-manno-heptose 7-phosphate: step 1/4. It participates in nucleotide-sugar biosynthesis; ADP-L-glycero-beta-D-manno-heptose biosynthesis; ADP-L-glycero-beta-D-manno-heptose from D-glycero-beta-D-manno-heptose 7-phosphate: step 3/4. In terms of biological role, catalyzes the phosphorylation of D-glycero-D-manno-heptose 7-phosphate at the C-1 position to selectively form D-glycero-beta-D-manno-heptose-1,7-bisphosphate. Its function is as follows. Catalyzes the ADP transfer from ATP to D-glycero-beta-D-manno-heptose 1-phosphate, yielding ADP-D-glycero-beta-D-manno-heptose. The protein is Bifunctional protein HldE of Pseudomonas syringae pv. syringae (strain B728a).